The chain runs to 390 residues: MALPLYLVGLSHKTAPLEVRERAALDPVVALPAALSALGKGVVLSTCNRTELYGVGSPEKARAFLLSRGVAPRHLYVKEGVEALRHLYRVAAGLDSLVVGEAQILGQVREALFLARRQGATESLLEKAFQSAIALGKRARSETGIGMGAVSVAYAALDLALAVYGDLSGLSVAVLGAGEMAELFLTHLKAHGVGRILVVNRTEEKAQALAERFGGEAFGLPALPQVLRQADLVVASAAAPHYLVGPEDLPKRAKPLFLIDIALPRNIDPRVGDLPHAYLYNLDDLKRVVDRNLRARAGEIPKVEALIEKALGDYMEWYAGHRVREAIRALEAWARVQAAKAQPEAGPVELEKAAGRLAHPFILGLKRRALDRVGGPPCPEDCLLYRLSRT.

Substrate contacts are provided by residues 46–49 (TCNR), S96, 101–103 (EAQ), and Q107. Residue C47 is the Nucleophile of the active site. NADP(+) is bound at residue 176 to 181 (GAGEMA).

The protein belongs to the glutamyl-tRNA reductase family. As to quaternary structure, homodimer.

It catalyses the reaction (S)-4-amino-5-oxopentanoate + tRNA(Glu) + NADP(+) = L-glutamyl-tRNA(Glu) + NADPH + H(+). Its pathway is porphyrin-containing compound metabolism; protoporphyrin-IX biosynthesis; 5-aminolevulinate from L-glutamyl-tRNA(Glu): step 1/2. Functionally, catalyzes the NADPH-dependent reduction of glutamyl-tRNA(Glu) to glutamate 1-semialdehyde (GSA). The sequence is that of Glutamyl-tRNA reductase from Thermus thermophilus (strain ATCC 27634 / DSM 579 / HB8).